Consider the following 95-residue polypeptide: Protein TusB (95 aa).

It belongs to the DsrH/TusB family. Heterohexamer, formed by a dimer of trimers. The hexameric TusBCD complex contains 2 copies each of TusB, TusC and TusD. The TusBCD complex interacts with TusE.

Its subcellular location is the cytoplasm. Its function is as follows. Part of a sulfur-relay system required for 2-thiolation of 5-methylaminomethyl-2-thiouridine (mnm(5)s(2)U) at tRNA wobble positions. The chain is Protein TusB from Yersinia enterocolitica serotype O:8 / biotype 1B (strain NCTC 13174 / 8081).